A 120-amino-acid polypeptide reads, in one-letter code: UPF0382 membrane protein SSP2132 (120 aa).

Transmembrane regions (helical) follow at residues 3–23 (VFII…AFGA), 46–66 (MYHG…SINV), 69–89 (VGWL…ILAL), and 94–114 (IIGA…LMLV).

The protein belongs to the UPF0382 family.

The protein localises to the cell membrane. The chain is UPF0382 membrane protein SSP2132 from Staphylococcus saprophyticus subsp. saprophyticus (strain ATCC 15305 / DSM 20229 / NCIMB 8711 / NCTC 7292 / S-41).